We begin with the raw amino-acid sequence, 198 residues long: Cyclotides mra4/mra5 (198 aa).

The first 22 residues, 1–22 (MESNKMVVGVLLIAAFALPALA), serve as a signal peptide directing secretion. The propeptide occupies 23–79 (LFERDVITHETIEAVLKKSTPNSNTMLQEDAINALTGKTLISQTILEETLLKNGVVG). 3 disulfide bridges follow: Cys84–Cys100, Cys88–Cys102, and Cys93–Cys107. The propeptide occupies 111 to 163 (SLALPTLEKDVITPEALEAVLKSNGGAIVNTKTIISNAIFEETLLNNANHVLG). Cystine bridges form between Cys167-Cys183, Cys171-Cys185, and Cys176-Cys190. Residues 194-198 (SLALN) constitute a propeptide that is removed on maturation.

Belongs to the cyclotide family. Bracelet subfamily. Post-translationally, these are cyclic peptides. In terms of processing, the mature peptides contain 3 disulfide bonds each.

Functionally, probably participates in a plant defense mechanism. This Melicytus ramiflorus (Whitey wood) protein is Cyclotides mra4/mra5.